A 465-amino-acid chain; its full sequence is tRNA modification GTPase MnmE (465 aa).

R21, E85, and K124 together coordinate (6S)-5-formyl-5,6,7,8-tetrahydrofolate. A TrmE-type G domain is found at 220 to 387 (GVPVAIIGET…LQQRLVAAAH (168 aa)). Residue N230 coordinates K(+). GTP is bound by residues 230 to 235 (NAGKST), 249 to 255 (SDIHGTT), and 274 to 277 (DTAG). S234 is a Mg(2+) binding site. Positions 249, 251, and 254 each coordinate K(+). Residue T255 participates in Mg(2+) binding. Position 465 (K465) interacts with (6S)-5-formyl-5,6,7,8-tetrahydrofolate.

It belongs to the TRAFAC class TrmE-Era-EngA-EngB-Septin-like GTPase superfamily. TrmE GTPase family. In terms of assembly, homodimer. Heterotetramer of two MnmE and two MnmG subunits. The cofactor is K(+).

It localises to the cytoplasm. Functionally, exhibits a very high intrinsic GTPase hydrolysis rate. Involved in the addition of a carboxymethylaminomethyl (cmnm) group at the wobble position (U34) of certain tRNAs, forming tRNA-cmnm(5)s(2)U34. The chain is tRNA modification GTPase MnmE from Bacteroides fragilis (strain ATCC 25285 / DSM 2151 / CCUG 4856 / JCM 11019 / LMG 10263 / NCTC 9343 / Onslow / VPI 2553 / EN-2).